We begin with the raw amino-acid sequence, 173 residues long: Ribosome maturation factor RimM (173 aa).

Residues 92–165 enclose the PRC barrel domain; it reads EDEYYHTDLI…RVVVALPQEI (74 aa).

This sequence belongs to the RimM family. Binds ribosomal protein uS19.

It is found in the cytoplasm. An accessory protein needed during the final step in the assembly of 30S ribosomal subunit, possibly for assembly of the head region. Essential for efficient processing of 16S rRNA. May be needed both before and after RbfA during the maturation of 16S rRNA. It has affinity for free ribosomal 30S subunits but not for 70S ribosomes. The sequence is that of Ribosome maturation factor RimM from Bradyrhizobium diazoefficiens (strain JCM 10833 / BCRC 13528 / IAM 13628 / NBRC 14792 / USDA 110).